The sequence spans 268 residues: Early nodulin-20 (268 aa).

Positions 1-24 (MSSSSPILLMFIFSIWMLISYSES) are cleaved as a signal peptide. In terms of domain architecture, Phytocyanin spans 25–129 (TDYLVGDSEN…GLKLAVVVMV (105 aa)). Asn-67 carries N-linked (GlcNAc...) asparagine glycosylation. Cys-83 and Cys-117 form a disulfide bridge. Pro residues-rich tracts occupy residues 134–145 (SSPPPPPSPPTP) and 160–185 (PSPP…TPIP). Residues 134–253 (SSPPPPPSPP…SGSKGGGAGH (120 aa)) are disordered. Positions 199-235 (PSLSKSPSPSESPSLAPSPSDSVASLAPSSSPSDESP) are enriched in low complexity. Ser-243 carries the GPI-anchor amidated serine lipid modification. Residues 244-268 (SGSKGGGAGHGFLEVSIAMMMFLIF) constitute a propeptide, removed in mature form.

It belongs to the early nodulin-like (ENODL) family.

It localises to the cell membrane. May act as a carbohydrate transporter. This Medicago truncatula (Barrel medic) protein is Early nodulin-20.